Reading from the N-terminus, the 361-residue chain is Peptide chain release factor 1 (361 aa).

Gln237 is modified (N5-methylglutamine).

Belongs to the prokaryotic/mitochondrial release factor family. Post-translationally, methylated by PrmC. Methylation increases the termination efficiency of RF1.

It is found in the cytoplasm. Peptide chain release factor 1 directs the termination of translation in response to the peptide chain termination codons UAG and UAA. The chain is Peptide chain release factor 1 from Thioalkalivibrio sulfidiphilus (strain HL-EbGR7).